The following is a 79-amino-acid chain: Sulfur carrier protein TusA (79 aa).

C17 acts as the Cysteine persulfide intermediate in catalysis.

Belongs to the sulfur carrier protein TusA family.

Its subcellular location is the cytoplasm. Sulfur carrier protein which probably makes part of a sulfur-relay system. This Haemophilus influenzae (strain ATCC 51907 / DSM 11121 / KW20 / Rd) protein is Sulfur carrier protein TusA.